The following is an 84-amino-acid chain: Putative lipoprotein RzoQ (84 aa).

Positions 1 to 22 (MRNRNLLKFLPGLLICLIVLTS) are cleaved as a signal peptide. C23 is lipidated: N-palmitoyl cysteine. The S-diacylglycerol cysteine moiety is linked to residue C23.

The protein localises to the cell membrane. The protein is Putative lipoprotein RzoQ (rzoQ) of Escherichia coli (strain K12).